Consider the following 393-residue polypeptide: tRNA(Met) cytidine acetate ligase (393 aa).

G81, N142, and R167 together coordinate ATP.

It belongs to the TmcAL family.

The protein localises to the cytoplasm. The enzyme catalyses cytidine(34) in elongator tRNA(Met) + acetate + ATP = N(4)-acetylcytidine(34) in elongator tRNA(Met) + AMP + diphosphate. Its function is as follows. Catalyzes the formation of N(4)-acetylcytidine (ac(4)C) at the wobble position of elongator tRNA(Met), using acetate and ATP as substrates. First activates an acetate ion to form acetyladenylate (Ac-AMP) and then transfers the acetyl group to tRNA to form ac(4)C34. In Bacillus cereus (strain ATCC 10987 / NRS 248), this protein is tRNA(Met) cytidine acetate ligase.